Consider the following 285-residue polypeptide: 4-diphosphocytidyl-2-C-methyl-D-erythritol kinase (285 aa).

Lys10 is an active-site residue. 93–103 is an ATP binding site; that stretch reads PIGGGLGGGSS. Asp135 is an active-site residue.

It belongs to the GHMP kinase family. IspE subfamily.

It carries out the reaction 4-CDP-2-C-methyl-D-erythritol + ATP = 4-CDP-2-C-methyl-D-erythritol 2-phosphate + ADP + H(+). Its pathway is isoprenoid biosynthesis; isopentenyl diphosphate biosynthesis via DXP pathway; isopentenyl diphosphate from 1-deoxy-D-xylulose 5-phosphate: step 3/6. Functionally, catalyzes the phosphorylation of the position 2 hydroxy group of 4-diphosphocytidyl-2C-methyl-D-erythritol. This is 4-diphosphocytidyl-2-C-methyl-D-erythritol kinase from Ruthia magnifica subsp. Calyptogena magnifica.